The chain runs to 269 residues: Putative imidazole glycerol phosphate synthase subunit hisF2 (269 aa).

Asp-133 is a catalytic residue.

It belongs to the HisA/HisF family. As to quaternary structure, heterodimer of HisH and HisF.

Its subcellular location is the cytoplasm. The catalysed reaction is 5-[(5-phospho-1-deoxy-D-ribulos-1-ylimino)methylamino]-1-(5-phospho-beta-D-ribosyl)imidazole-4-carboxamide + L-glutamine = D-erythro-1-(imidazol-4-yl)glycerol 3-phosphate + 5-amino-1-(5-phospho-beta-D-ribosyl)imidazole-4-carboxamide + L-glutamate + H(+). It participates in amino-acid biosynthesis; L-histidine biosynthesis; L-histidine from 5-phospho-alpha-D-ribose 1-diphosphate: step 5/9. In terms of biological role, IGPS catalyzes the conversion of PRFAR and glutamine to IGP, AICAR and glutamate. The HisF subunit catalyzes the cyclization activity that produces IGP and AICAR from PRFAR using the ammonia provided by the HisH subunit. In Parasynechococcus marenigrum (strain WH8102), this protein is Putative imidazole glycerol phosphate synthase subunit hisF2 (hisF2).